The chain runs to 111 residues: Cell division protein FtsB (111 aa).

Residues 1–3 lie on the Cytoplasmic side of the membrane; the sequence is MRL. A helical membrane pass occupies residues 4-21; the sequence is LFLVLLVLLGLIQYPLWL. The Periplasmic segment spans residues 22-111; the sequence is GKGGWFKVWD…PGQTASAPRR (90 aa). The stretch at 31 to 62 forms a coiled coil; that stretch reads DLQRQVAAQHETNDGLRARNAALEAEVRDLAT. The tract at residues 88 to 111 is disordered; the sequence is VPPGTPVPQPAPGAPGQTASAPRR. Over residues 90–100 the composition is skewed to pro residues; sequence PGTPVPQPAPG. Residues 101-111 are compositionally biased toward low complexity; sequence APGQTASAPRR.

The protein belongs to the FtsB family. In terms of assembly, part of a complex composed of FtsB, FtsL and FtsQ.

The protein localises to the cell inner membrane. Essential cell division protein. May link together the upstream cell division proteins, which are predominantly cytoplasmic, with the downstream cell division proteins, which are predominantly periplasmic. The polypeptide is Cell division protein FtsB (Bordetella petrii (strain ATCC BAA-461 / DSM 12804 / CCUG 43448)).